A 215-amino-acid chain; its full sequence is Thiamine-phosphate synthase (215 aa).

Residues 37–41 (QLRIK) and Asn-69 each bind 4-amino-2-methyl-5-(diphosphooxymethyl)pyrimidine. Mg(2+) is bound by residues Asp-70 and Asp-89. Ser-108 provides a ligand contact to 4-amino-2-methyl-5-(diphosphooxymethyl)pyrimidine. 134–136 (TQT) lines the 2-[(2R,5Z)-2-carboxy-4-methylthiazol-5(2H)-ylidene]ethyl phosphate pocket. Lys-137 serves as a coordination point for 4-amino-2-methyl-5-(diphosphooxymethyl)pyrimidine. 2-[(2R,5Z)-2-carboxy-4-methylthiazol-5(2H)-ylidene]ethyl phosphate-binding positions include Gly-166 and 186 to 187 (VS).

It belongs to the thiamine-phosphate synthase family. Requires Mg(2+) as cofactor.

The enzyme catalyses 2-[(2R,5Z)-2-carboxy-4-methylthiazol-5(2H)-ylidene]ethyl phosphate + 4-amino-2-methyl-5-(diphosphooxymethyl)pyrimidine + 2 H(+) = thiamine phosphate + CO2 + diphosphate. It carries out the reaction 2-(2-carboxy-4-methylthiazol-5-yl)ethyl phosphate + 4-amino-2-methyl-5-(diphosphooxymethyl)pyrimidine + 2 H(+) = thiamine phosphate + CO2 + diphosphate. It catalyses the reaction 4-methyl-5-(2-phosphooxyethyl)-thiazole + 4-amino-2-methyl-5-(diphosphooxymethyl)pyrimidine + H(+) = thiamine phosphate + diphosphate. The protein operates within cofactor biosynthesis; thiamine diphosphate biosynthesis; thiamine phosphate from 4-amino-2-methyl-5-diphosphomethylpyrimidine and 4-methyl-5-(2-phosphoethyl)-thiazole: step 1/1. Condenses 4-methyl-5-(beta-hydroxyethyl)thiazole monophosphate (THZ-P) and 2-methyl-4-amino-5-hydroxymethyl pyrimidine pyrophosphate (HMP-PP) to form thiamine monophosphate (TMP). This is Thiamine-phosphate synthase from Yersinia pestis (strain Pestoides F).